The chain runs to 269 residues: NAD kinase (269 aa).

Residue aspartate 45 is the Proton acceptor of the active site. Residues 45-46 (DG), 122-123 (NE), arginine 149, aspartate 151, and alanine 186 contribute to the NAD(+) site.

It belongs to the NAD kinase family. The cofactor is a divalent metal cation.

It localises to the cytoplasm. It catalyses the reaction NAD(+) + ATP = ADP + NADP(+) + H(+). Functionally, involved in the regulation of the intracellular balance of NAD and NADP, and is a key enzyme in the biosynthesis of NADP. Catalyzes specifically the phosphorylation on 2'-hydroxyl of the adenosine moiety of NAD to yield NADP. The polypeptide is NAD kinase (Staphylococcus saprophyticus subsp. saprophyticus (strain ATCC 15305 / DSM 20229 / NCIMB 8711 / NCTC 7292 / S-41)).